A 317-amino-acid polypeptide reads, in one-letter code: Curved DNA-binding protein (317 aa).

A J domain is found at 5 to 69 (DYYKILGVEP…QKRAEFDEIR (65 aa)).

The protein localises to the cytoplasm. It is found in the nucleoid. In terms of biological role, DNA-binding protein that preferentially recognizes a curved DNA sequence. It is probably a functional analog of DnaJ; displays overlapping activities with DnaJ, but functions under different conditions, probably acting as a molecular chaperone in an adaptive response to environmental stresses other than heat shock. Lacks autonomous chaperone activity; binds native substrates and targets them for recognition by DnaK. Its activity is inhibited by the binding of CbpM. The sequence is that of Curved DNA-binding protein from Pseudomonas putida (strain W619).